The primary structure comprises 322 residues: Gluconeogenesis factor (322 aa).

NAD(+) is bound by residues threonine 13, 217–219 (NVM), 263–267 (KYAKE), and 300–301 (RH).

Belongs to the gluconeogenesis factor family.

The protein resides in the cytoplasm. Functionally, required for morphogenesis under gluconeogenic growth conditions. This chain is Gluconeogenesis factor, found in Halalkalibacterium halodurans (strain ATCC BAA-125 / DSM 18197 / FERM 7344 / JCM 9153 / C-125) (Bacillus halodurans).